The chain runs to 192 residues: uncharacterized protein (192 aa).

Residues 17–73 form a disordered region; sequence MLRGSGKKPIQRLAKAPAATASSKTSEWRATTAYGFLPAGGDVRPHSPRYESQGVLS. A compositionally biased stretch (low complexity) spans 30–41; it reads AKAPAATASSKT.

This is an uncharacterized protein from Sinorhizobium fredii (strain NBRC 101917 / NGR234).